Consider the following 727-residue polypeptide: MAEAEGESLESWLNKATNPSNRQEDWEYIIGFCDQINKELEGPQIAVRLLAHKIQSPQEWEAVQALTVLEACMKNCGRRLHNEVGKFRFLNELIKVVSPKYLGDRVSEKVKAKVIELLFSWTLALPEEAKIKDAYHMLKRQGIVQSDPPIPMDRTLIPSPPPRPKNPVFDDEEKSKLLAKLLRSKNPDDLQEANQLIKSMVKEDEARIQKVTKRLHTLEEVNNNVKLLHEMLLHYSQEFSSEADKELMKELFDRCENKRRTLFKLASETEDNDNSLGDILQASDNLSRVINSYKTIIEGQIINGEVTTSTVPDSEGNSHCGNQGALIDLAELDTPSSSSPVLAPAPAPPTSGIPILPPPPQTSGPPRSRSSSQAEAPSGPDSTNNALSLLDEELLCLGLSDPAPTAPKESAGNSPWHLFQNEPSSDLDFFSPRLVSAASCPSEGSLLPPPVSTSSLSQAPLPAAFPAPVVPASAVTHSTGSFTFSSGPAPALVPKAEPEGPEYPSSSISHRLDALDQLLEEAKVTSGLVKPVSCFSPGPTASPLLPASTPARPLLPFSTGPGSPLFQSPAFQSQGSPQKGPELSLASVHVPLESIKPSSALPVTAYDKNGFRILFHFAKECPPGRPDVLVVVVSMLNTAPLPVKSIVLQAAVPKSMKVKLQPPSGTELSPFSPIQPPAAITQVMLLANPMKEKVRLRYKLTFALGEQLSTELGEVDQFPPVEQWGNL.

Residues 16–146 (ATNPSNRQED…MLKRQGIVQS (131 aa)) form the VHS domain. Ser159 and Ser275 each carry phosphoserine. The GAT domain maps to 171–298 (DEEKSKLLAK…VINSYKTIIE (128 aa)). The tract at residues 299-597 (GQIINGEVTT…VHVPLESIKP (299 aa)) is unstructured hinge. The interval 334 to 385 (TPSSSSPVLAPAPAPPTSGIPILPPPPQTSGPPRSRSSSQAEAPSGPDSTNN) is disordered. The segment covering 343-363 (APAPAPPTSGIPILPPPPQTS) has biased composition (pro residues). Residues 364–374 (GPPRSRSSSQA) show a composition bias toward low complexity. The DXXLL motif lies at 391 to 395 (DEELL). The interval 400–419 (SDPAPTAPKESAGNSPWHLF) is disordered. Residues 598–719 (SSALPVTAYD…TELGEVDQFP (122 aa)) enclose the GAE domain.

Belongs to the GGA protein family. In terms of assembly, monomer. Interacts with GGA1 and GGA2. Binds to clathrin and activated ARFs, such as ARF1, ARF5 and ARF6. Binds RABEP1 and RABGEF1. Interacts with the membrane proteins M6PR/CD-MPR and IGF2R/CI-MPR and the accessory proteins SYNRG, EPN4, NECAP1, NECAP2 and AFTPH/aftiphilin. Interacts with TSG101 and UBC. Interacts with ADRA2B. Interacts with NTRK1; the interaction is independent of NTRK1 activation and ubiquitination. Interacts (via VHS domain) with BACE1 (via DXXLL motif). In terms of processing, phosphorylated by CK2 and dephosphorylated by PP2A. Phosphorylation of GGA3 allows the internal DXXLL motif to bind the VHS domain and to inhibit the recognition of cargo signals. Post-translationally, ubiquitinated. Proteolytically cleaved during apoptosis by CASP3.

It localises to the golgi apparatus. It is found in the trans-Golgi network membrane. The protein localises to the endosome membrane. Its subcellular location is the early endosome membrane. The protein resides in the recycling endosome membrane. In terms of biological role, plays a role in protein sorting and trafficking between the trans-Golgi network (TGN) and endosomes. Mediates the ARF-dependent recruitment of clathrin to the TGN and binds ubiquitinated proteins and membrane cargo molecules with a cytosolic acidic cluster-dileucine (DXXLL) motif. Mediates export of the GPCR receptor ADRA2B to the cell surface. Involved in BACE1 transport and sorting as well as regulation of BACE1 protein levels. Regulates retrograde transport of BACE1 from endosomes to the trans-Golgi network via interaction through the VHS motif and dependent of BACE1 phosphorylation. Modulates BACE1 protein levels independently of the interaction between VHS domain and DXXLL motif through recognition of ubiquitination. Key player in a novel DXXLL-mediated endosomal sorting machinery to the recycling pathway that targets NTRK1 to the plasma membrane. This chain is ADP-ribosylation factor-binding protein GGA3, found in Rattus norvegicus (Rat).